The chain runs to 325 residues: MNLNKHSERKFDLITVGRACIDLNAVEYNRPMEETMTFSKYVGGSPANIAIGTAKLGLKVGFIGKISADQHGRFIEKYMRDLSINTDGMVKDTEGRKVGLAFTEIKSPDECSILMYRENVADLYLTPEEISEDYIKEARVLLISGTALAQSPSREAVLKAVSLARKNDVAIAFELDYRPYTWTNTEETAVYYSLVAEQADVIIGTRDEFDMMENQVGGKNEATKAHLFQHQAEIVVIKHGVEGSFAYTKAGETFQAKAYKTKVLKTFGAGDSYASAFLYGLFSGESIETALKYGSAAASIVVSKHSSSDAMPTADEIKALIAQAE.

This sequence belongs to the carbohydrate kinase PfkB family.

The enzyme catalyses 5-dehydro-2-deoxy-D-gluconate + ATP = 6-phospho-5-dehydro-2-deoxy-D-gluconate + ADP + H(+). The protein operates within polyol metabolism; myo-inositol degradation into acetyl-CoA; acetyl-CoA from myo-inositol: step 5/7. Its function is as follows. Catalyzes the phosphorylation of 5-dehydro-2-deoxy-D-gluconate (2-deoxy-5-keto-D-gluconate or DKG) to 6-phospho-5-dehydro-2-deoxy-D-gluconate (DKGP). The sequence is that of 5-dehydro-2-deoxygluconokinase from Listeria monocytogenes serotype 4a (strain HCC23).